The chain runs to 89 residues: uncharacterized protein (89 aa).

Residues 1 to 27 (MKKAAAVLLSLGLVFGFSYGAGHVAEA) form the signal peptide.

This is an uncharacterized protein from Bacillus subtilis (strain 168).